The chain runs to 204 residues: ATP synthase subunit 4, mitochondrial (204 aa).

The next 2 helical transmembrane spans lie at Gly27–Val47 and Ile52–Tyr72.

In terms of assembly, F-type ATP synthases have 2 components, the catalytic core F(1) and the membrane-embedded component F(0), linked together by a central stalk and a peripheral stalk. The central stalk, also called rotor shaft, is often seen as part of F(1). The peripheral stalk is seen as part of F(0). F(0) contains the membrane channel next to the rotor. F-type ATP synthases form dimers but each monomer functions independently in ATP generation. The dimer consists of 18 different polypeptides: ATP1 (subunit alpha, part of F(1), 3 molecules per monomer), ATP2 (subunit beta, part of F(1), 3 molecules per monomer), ATP3 (subunit gamma, part of the central stalk), ATP4 (subunit b, part of the peripheral stalk), ATP5/OSCP (subunit 5/OSCP, part of the peripheral stalk), ATP6 (subunit a, part of the peripheral stalk), ATP7 (subunit d, part of the peripheral stalk), ATP8 (subunit 8, part of the peripheral stalk), OLI1 (subunit c, part of the rotor, 10 molecules per monomer), ATP14 (subunit h, part of the peripheral stalk), ATP15 (subunit epsilon, part of the central stalk), ATP16 (subunit delta, part of the central stalk), ATP17 (subunit f, part of the peripheral stalk), ATP18 (subunit i/j, part of the peripheral stalk). Dimer-specific subunits are ATP19 (subunit k, at interface between monomers), ATP20 (subunit g, at interface between monomers), TIM11 (subunit e, at interface between monomers). Also contains subunit L.

It is found in the mitochondrion inner membrane. Its function is as follows. Mitochondrial membrane ATP synthase (F(1)F(0) ATP synthase or Complex V) produces ATP from ADP in the presence of a proton gradient across the membrane which is generated by electron transport complexes of the respiratory chain. F-type ATP synthases consist of two structural domains, F(1) - containing the extramembraneous catalytic core, and F(0) - containing the membrane proton channel, linked together by a central stalk and a peripheral stalk. During catalysis, ATP synthesis in the catalytic domain of F(1) is coupled via a rotary mechanism of the central stalk subunits to proton translocation. Part of the complex F(0) domain and the peripheral stalk, which acts as a stator to hold the catalytic alpha/ATP1(3)beta/ATP2(3) subcomplex and subunit a/ATP6 static relative to the rotary elements. The chain is ATP synthase subunit 4, mitochondrial from Pichia angusta (Yeast).